A 412-amino-acid polypeptide reads, in one-letter code: Tryptophan 2,3-dioxygenase (412 aa).

Substrate is bound by residues 79–83 (FIVVH), tyrosine 146, and arginine 150. Histidine 346 is a heme binding site. Threonine 360 lines the substrate pocket.

This sequence belongs to the tryptophan 2,3-dioxygenase family. As to quaternary structure, homotetramer. Heme serves as cofactor.

The enzyme catalyses L-tryptophan + O2 = N-formyl-L-kynurenine. The protein operates within amino-acid degradation; L-tryptophan degradation via kynurenine pathway; L-kynurenine from L-tryptophan: step 1/2. Functionally, heme-dependent dioxygenase that catalyzes the oxidative cleavage of the L-tryptophan (L-Trp) pyrrole ring and converts L-tryptophan to N-formyl-L-kynurenine. Catalyzes the oxidative cleavage of the indole moiety. The sequence is that of Tryptophan 2,3-dioxygenase from Sorangium cellulosum (strain So ce56) (Polyangium cellulosum (strain So ce56)).